Reading from the N-terminus, the 415-residue chain is Probable glucuronosyltransferase Os01g0926600 (415 aa).

Over 1–4 the chain is Cytoplasmic; it reads MAMR. A helical; Signal-anchor for type II membrane protein transmembrane segment spans residues 5 to 25; that stretch reads LSSAAVALALLLAATALEDVA. At 26-415 the chain is on the lumenal side; sequence RGQDTERIEG…QGPVGDLKPW (390 aa). N142 and N403 each carry an N-linked (GlcNAc...) asparagine glycan.

The protein belongs to the glycosyltransferase 47 family.

It is found in the golgi apparatus membrane. Its function is as follows. Involved in the synthesis of glucuronoxylan hemicellulose in secondary cell walls. The protein is Probable glucuronosyltransferase Os01g0926600 of Oryza sativa subsp. japonica (Rice).